A 328-amino-acid polypeptide reads, in one-letter code: Glycerophosphodiester phosphodiesterase GDPD4 (328 aa).

Residues 35 to 55 form a helical membrane-spanning segment; the sequence is TILFAVIFLAIFPPLYFHFKL. Residues 73–312 form the GP-PDE domain; the sequence is PLVCAHGGDS…SDPSMFQGLM (240 aa).

Belongs to the glycerophosphoryl diester phosphodiesterase family. As to expression, expressed in rosette and cauline leaves.

It is found in the membrane. It carries out the reaction a sn-glycero-3-phosphodiester + H2O = an alcohol + sn-glycerol 3-phosphate + H(+). In Arabidopsis thaliana (Mouse-ear cress), this protein is Glycerophosphodiester phosphodiesterase GDPD4.